Consider the following 136-residue polypeptide: Holo-[acyl-carrier-protein] synthase (136 aa).

Positions 8 and 57 each coordinate Mg(2+).

It belongs to the P-Pant transferase superfamily. AcpS family. The cofactor is Mg(2+).

It is found in the cytoplasm. The enzyme catalyses apo-[ACP] + CoA = holo-[ACP] + adenosine 3',5'-bisphosphate + H(+). Its function is as follows. Transfers the 4'-phosphopantetheine moiety from coenzyme A to a Ser of acyl-carrier-protein. In Azorhizobium caulinodans (strain ATCC 43989 / DSM 5975 / JCM 20966 / LMG 6465 / NBRC 14845 / NCIMB 13405 / ORS 571), this protein is Holo-[acyl-carrier-protein] synthase.